Consider the following 186-residue polypeptide: Bis(5'-nucleosyl)-tetraphosphatase, symmetrical (186 aa).

One can recognise an HD domain in the interval 18–132 (RYIHTVGVMN…IYVADYIEPN (115 aa)). H21 provides a ligand contact to ADP. Fe cation is bound by residues H21, H50, and D51. ADP-binding positions include 51 to 54 (DYAK), H83, 109 to 110 (HT), D127, R133, and 170 to 175 (PVFPDT). D127 is a Fe cation binding site.

This sequence belongs to the Ap4A hydrolase YqeK family. Homodimer.

The enzyme catalyses P(1),P(4)-bis(5'-adenosyl) tetraphosphate + H2O = 2 ADP + 2 H(+). In terms of biological role, hydrolyzes diadenosine 5',5'''-P1,P4-tetraphosphate (Ap4A) to yield ADP. In Bacillus subtilis (strain 168), this protein is Bis(5'-nucleosyl)-tetraphosphatase, symmetrical (yqeK).